Here is a 463-residue protein sequence, read N- to C-terminus: MSSVTGSGITSGFIDLATYDNLERAMYGGSDATTYFVKEHYPVGWFTKLPSLAAKMSGNPAFGQQFSVGVPRSGDYILNAWLVLKTPEVELLAANQLGDNGTIRWTKNPMHNIVESVTLSFNDISAQSFNTAYLDAWSEYTMPEAKRTGYYNMIGNTSDLINPAPATGQDGARVLPAKNLVLPLPFFFSRDSGLALPVVSLPYNEIRITVKLRAIHDLLILQHNTTGAISPIVASDLAGGLPDTVEANVYMTVALITGDERQAMSSTVRDMVVEQVQAAPVHMVNPRNATTFHTDMRFSHAVKALMFMVQNVTHPSVGSNYTCVTPVVGVGNTVLEPALAVDPVKSASLVYENTTRLPDMGVEYYSLVEPWYYATSIPVSTGHHLYSYALSLQDPHPSGSTNYGRLTNASLNVTLSAEATTAAAGGGGNNSGYTTAQKYALIVLAINHNIIRIMNGSMGFPIL.

This sequence belongs to the NCLDV major capsid protein family. As to quaternary structure, homomultimer.

The protein localises to the virion. Major capsid protein that self assembles to form a T=133 or T=147 icosahedral capsid. This Dryophytes versicolor (chameleon treefrog) protein is Major capsid protein.